Consider the following 150-residue polypeptide: Large ribosomal subunit protein bL9 (150 aa).

Belongs to the bacterial ribosomal protein bL9 family.

Functionally, binds to the 23S rRNA. The sequence is that of Large ribosomal subunit protein bL9 from Streptococcus sanguinis (strain SK36).